The sequence spans 305 residues: Olfactory receptor 4X1 (305 aa).

The Extracellular portion of the chain corresponds to 1–23; the sequence is MVATNNVTEIIFVGFSQNWSEQR. N-linked (GlcNAc...) asparagine glycosylation is found at Asn6 and Asn18. Residues 24–47 traverse the membrane as a helical segment; that stretch reads VISVMFLLMYTAVVLGNGLIVVTI. The Cytoplasmic segment spans residues 48–55; that stretch reads LASKVLTS. A helical membrane pass occupies residues 56 to 77; that stretch reads PMYFFLSYLSFVEICYCSVMAP. Topologically, residues 78–98 are extracellular; that stretch reads KLIFDSFIKRKVISLKGCLTQ. Cys95 and Cys187 are disulfide-bonded. Residues 99 to 118 form a helical membrane-spanning segment; it reads MFSLHFFGGTEAFLLMVMAY. The Cytoplasmic segment spans residues 119–137; that stretch reads DRYVAICKPLHYMAIMNQR. Residues 138-156 form a helical membrane-spanning segment; that stretch reads MCGLLVRIAWGGGLLHSVG. The Extracellular portion of the chain corresponds to 157–193; that stretch reads QTFLIFQLPFCGPNIMDHYFCDVHPVLELACADTFFI. Residues 194 to 217 traverse the membrane as a helical segment; the sequence is SLLIITNGGSISVVSFFVLMASYL. The Cytoplasmic portion of the chain corresponds to 218-233; it reads IILHFLRSHNLEGQHK. Residues 234–256 form a helical membrane-spanning segment; that stretch reads ALSTCASHVTVVDLFFIPCSLVY. The Extracellular portion of the chain corresponds to 257–267; the sequence is IRPCVTLPADK. A helical membrane pass occupies residues 268 to 287; sequence IVAVFYTVVTPLLNPVIYSF. Topologically, residues 288 to 305 are cytoplasmic; it reads RNAEVKNAMRRFIGGKVI.

This sequence belongs to the G-protein coupled receptor 1 family.

Its subcellular location is the cell membrane. Odorant receptor. The sequence is that of Olfactory receptor 4X1 (OR4X1) from Homo sapiens (Human).